A 136-amino-acid chain; its full sequence is Acyl carrier protein 1, chloroplastic (136 aa).

A chloroplast-targeting transit peptide spans M1–C52. The 76-residue stretch at P56–I131 folds into the Carrier domain. S91 carries the O-(pantetheine 4'-phosphoryl)serine modification.

The protein belongs to the acyl carrier protein (ACP) family. In terms of processing, 4'-phosphopantetheine is transferred from CoA to a specific serine of apo-ACP by acpS. This modification is essential for activity because fatty acids are bound in thioester linkage to the sulfhydryl of the prosthetic group.

Its subcellular location is the plastid. It localises to the chloroplast. It functions in the pathway lipid metabolism; fatty acid biosynthesis. Carrier of the growing fatty acid chain in fatty acid biosynthesis. The polypeptide is Acyl carrier protein 1, chloroplastic (ACP1) (Casuarina glauca (Swamp oak)).